The primary structure comprises 289 residues: Pyridoxal kinase PdxY (289 aa).

Substrate is bound by residues Ser-9 and 44–45; that span reads TQ. Positions 112, 144, 149, and 182 each coordinate ATP. Asp-221 serves as a coordination point for substrate.

The protein belongs to the pyridoxine kinase family. PdxY subfamily. In terms of assembly, homodimer. It depends on Mg(2+) as a cofactor.

The catalysed reaction is pyridoxal + ATP = pyridoxal 5'-phosphate + ADP + H(+). Its pathway is cofactor metabolism; pyridoxal 5'-phosphate salvage; pyridoxal 5'-phosphate from pyridoxal: step 1/1. Pyridoxal kinase involved in the salvage pathway of pyridoxal 5'-phosphate (PLP). Catalyzes the phosphorylation of pyridoxal to PLP. The polypeptide is Pyridoxal kinase PdxY (Vibrio campbellii (strain ATCC BAA-1116)).